The primary structure comprises 225 residues: Glycerol-3-phosphate acyltransferase (225 aa).

The next 6 helical transmembrane spans lie at M1–F21, G56–V76, I95–S115, V134–V154, I159–A178, and L182–A201.

Belongs to the PlsY family. In terms of assembly, probably interacts with PlsX.

The protein resides in the cell inner membrane. The catalysed reaction is an acyl phosphate + sn-glycerol 3-phosphate = a 1-acyl-sn-glycero-3-phosphate + phosphate. It functions in the pathway lipid metabolism; phospholipid metabolism. In terms of biological role, catalyzes the transfer of an acyl group from acyl-phosphate (acyl-PO(4)) to glycerol-3-phosphate (G3P) to form lysophosphatidic acid (LPA). This enzyme utilizes acyl-phosphate as fatty acyl donor, but not acyl-CoA or acyl-ACP. The sequence is that of Glycerol-3-phosphate acyltransferase from Acaryochloris marina (strain MBIC 11017).